The primary structure comprises 660 residues: Bifunctional polymyxin resistance protein ArnA (660 aa).

Residues 1 to 304 (MKTVVFAYHD…TLGLVQGSRL (304 aa)) are formyltransferase ArnAFT. 86 to 88 (HLI) provides a ligand contact to (6R)-10-formyltetrahydrofolate. The active-site Proton donor; for formyltransferase activity is His104. (6R)-10-formyltetrahydrofolate contacts are provided by residues Arg114 and 136-140 (VKRAD). The dehydrogenase ArnADH stretch occupies residues 314 to 660 (RRTRVLILGV…RTVDLTDKPS (347 aa)). NAD(+)-binding positions include Asp347 and 368 to 369 (DI). UDP-alpha-D-glucuronate is bound by residues Ala393, Tyr398, and 432–433 (TS). Glu434 functions as the Proton acceptor; for decarboxylase activity in the catalytic mechanism. Residues Arg460, Asn492, 526 to 535 (KLIDGGKQKR), and Tyr613 each bind UDP-alpha-D-glucuronate. Arg619 functions as the Proton donor; for decarboxylase activity in the catalytic mechanism.

The protein in the N-terminal section; belongs to the Fmt family. UDP-L-Ara4N formyltransferase subfamily. This sequence in the C-terminal section; belongs to the NAD(P)-dependent epimerase/dehydratase family. UDP-glucuronic acid decarboxylase subfamily. As to quaternary structure, homohexamer, formed by a dimer of trimers.

It carries out the reaction UDP-alpha-D-glucuronate + NAD(+) = UDP-beta-L-threo-pentopyranos-4-ulose + CO2 + NADH. The catalysed reaction is UDP-4-amino-4-deoxy-beta-L-arabinose + (6R)-10-formyltetrahydrofolate = UDP-4-deoxy-4-formamido-beta-L-arabinose + (6S)-5,6,7,8-tetrahydrofolate + H(+). It functions in the pathway nucleotide-sugar biosynthesis; UDP-4-deoxy-4-formamido-beta-L-arabinose biosynthesis; UDP-4-deoxy-4-formamido-beta-L-arabinose from UDP-alpha-D-glucuronate: step 1/3. The protein operates within nucleotide-sugar biosynthesis; UDP-4-deoxy-4-formamido-beta-L-arabinose biosynthesis; UDP-4-deoxy-4-formamido-beta-L-arabinose from UDP-alpha-D-glucuronate: step 3/3. It participates in bacterial outer membrane biogenesis; lipopolysaccharide biosynthesis. Its function is as follows. Bifunctional enzyme that catalyzes the oxidative decarboxylation of UDP-glucuronic acid (UDP-GlcUA) to UDP-4-keto-arabinose (UDP-Ara4O) and the addition of a formyl group to UDP-4-amino-4-deoxy-L-arabinose (UDP-L-Ara4N) to form UDP-L-4-formamido-arabinose (UDP-L-Ara4FN). The modified arabinose is attached to lipid A and is required for resistance to polymyxin and cationic antimicrobial peptides. The chain is Bifunctional polymyxin resistance protein ArnA from Escherichia coli (strain K12 / MC4100 / BW2952).